Consider the following 402-residue polypeptide: Zinc finger CCHC domain-containing protein 12 (402 aa).

Residues 268–277 (DTPDDSDEDV) show a composition bias toward acidic residues. The tract at residues 268–342 (DTPDDSDEDV…PGNMRRTRKR (75 aa)) is disordered. Positions 311–323 (SPNNSQFPSPCTS) are enriched in polar residues. A CCHC-type zinc finger spans residues 346–363 (IRCSYCGEEGHSKETCDN). Positions 383–392 (HTEERSREAP) are enriched in basic and acidic residues. The disordered stretch occupies residues 383 to 402 (HTEERSREAPVEPSDPCELQ).

This sequence belongs to the ZCCHC12 family. As to quaternary structure, interacts with SMAD1 and CREB-binding protein (CBP). Forms a protein-DNA complex through its association with SMAD1.

Its function is as follows. Transcriptional coactivator in the bone morphogenetic protein (BMP)-signaling pathway. It positively modulates BMP signaling by interacting with SMAD1 and associating with CBP in the transcription complex. It contributes to the BMP-induced enhancement of cholinergic-neuron-specific gene expression. This chain is Zinc finger CCHC domain-containing protein 12 (ZCCHC12), found in Bos taurus (Bovine).